The primary structure comprises 324 residues: MAAAAPGNGRASAPRLLLLFLVPLLWAPAAVRAGPDEDLSHRNKEPPAPAQQLQPQPVAVQGPEPARVEKIFTPAAPVHTNKEDPATQTNLGFIHAFVAAISVIIVSELGDKTFFIAAIMAMRYNRLTVLAGAMLALGLMTCLSVLFGYATTVIPRVYTYYVSTVLFAIFGIRMLREGLKMSPDEGQEELEEVQAELKKKDEEFQRTKLLNGPGDVETGTSITVPQKKWLHFISPIFVQALTLTFLAEWGDRSQLTTIVLAAREDPYGVAVGGTVGHCLCTGLAVIGGRMIAQKISVRTVTIIGGIVFLAFAFSALFISPDSGF.

The signal sequence occupies residues 1–33 (MAAAAPGNGRASAPRLLLLFLVPLLWAPAAVRA). At 34-89 (GPDEDLSHRNKEPPAPAQQLQPQPVAVQGPEPARVEKIFTPAAPVHTNKEDPATQT) the chain is on the lumenal side. Positions 35–45 (PDEDLSHRNKE) are enriched in basic and acidic residues. The interval 35-59 (PDEDLSHRNKEPPAPAQQLQPQPVA) is disordered. Residues 50–59 (AQQLQPQPVA) show a composition bias toward low complexity. Residues 90-110 (NLGFIHAFVAAISVIIVSELG) traverse the membrane as a helical segment. Residues 111-126 (DKTFFIAAIMAMRYNR) lie on the Cytoplasmic side of the membrane. A helical transmembrane segment spans residues 127–147 (LTVLAGAMLALGLMTCLSVLF). Topologically, residues 148 to 151 (GYAT) are lumenal. A helical membrane pass occupies residues 152-172 (TVIPRVYTYYVSTVLFAIFGI). Topologically, residues 173-228 (RMLREGLKMSPDEGQEELEEVQAELKKKDEEFQRTKLLNGPGDVETGTSITVPQKK) are cytoplasmic. Residues 184–211 (DEGQEELEEVQAELKKKDEEFQRTKLLN) are a coiled coil. The chain crosses the membrane as a helical span at residues 229-249 (WLHFISPIFVQALTLTFLAEW). At 250–267 (GDRSQLTTIVLAAREDPY) the chain is on the lumenal side. The helical transmembrane segment at 268 to 288 (GVAVGGTVGHCLCTGLAVIGG) threads the bilayer. The Cytoplasmic portion of the chain corresponds to 289-299 (RMIAQKISVRT). Residues 300–320 (VTIIGGIVFLAFAFSALFISP) traverse the membrane as a helical segment. The Lumenal portion of the chain corresponds to 321–324 (DSGF).

Belongs to the GDT1 family. Ubiquitously expressed.

Its subcellular location is the golgi apparatus membrane. The enzyme catalyses Ca(2+)(in) + n H(+)(out) = Ca(2+)(out) + n H(+)(in). It catalyses the reaction Mn(2+)(in) + n H(+)(out) = Mn(2+)(out) + n H(+)(in). In terms of biological role, putative divalent cation:proton antiporter that exchanges calcium or manganese ions for protons across the Golgi membrane. Mediates the reversible transport of calcium or manganese to the Golgi lumen driven by the proton gradient and possibly the membrane potential generated by V-ATPase. Provides calcium or manganese cofactors to resident Golgi enzymes and contributes to the maintenance of an acidic luminal Golgi pH required for proper functioning of the secretory pathway. Promotes Ca(2+) storage within the Golgi lumen of the mammary epithelial cells to be then secreted into milk. The transport mechanism and stoichiometry remains to be elucidated. This is Putative divalent cation/proton antiporter TMEM165 from Homo sapiens (Human).